Consider the following 441-residue polypeptide: Trigger factor (441 aa).

Residues 161 to 246 (GDMVTVDFQG…VKDVKERILA (86 aa)) enclose the PPIase FKBP-type domain.

It belongs to the FKBP-type PPIase family. Tig subfamily.

It localises to the cytoplasm. The catalysed reaction is [protein]-peptidylproline (omega=180) = [protein]-peptidylproline (omega=0). Its function is as follows. Involved in protein export. Acts as a chaperone by maintaining the newly synthesized protein in an open conformation. Functions as a peptidyl-prolyl cis-trans isomerase. The protein is Trigger factor of Desulfotalea psychrophila (strain LSv54 / DSM 12343).